Reading from the N-terminus, the 394-residue chain is 2-oxoglutarate and iron-dependent oxygenase domain-containing protein CP2 (394 aa).

The disordered stretch occupies residues 1–35 (MSSEQREGSQETTTTTVEGNGTIAGQNSHSAAPTT). Residues 17 to 35 (VEGNGTIAGQNSHSAAPTT) show a composition bias toward polar residues. The Fe2OG dioxygenase domain maps to 248–347 (DSHHGFVVEY…RVNMLLWCRS (100 aa)). Fe cation contacts are provided by histidine 268, aspartate 270, and histidine 328. Arginine 338 contacts 2-oxoglutarate.

Fe(2+) is required as a cofactor. Requires L-ascorbate as cofactor. In terms of tissue distribution, expressed in roots, cotyledons, rosette leaves, cauline leaves, inflorescences and siliques.

The protein resides in the nucleus. It is found in the nucleoplasm. Participates in the epigenetic repression of flowering genes in association with ICU11. Functions in the repression of several members of the MADS-box transcription factors family, including SEP3, during vegetative development via histone modification. This Arabidopsis thaliana (Mouse-ear cress) protein is 2-oxoglutarate and iron-dependent oxygenase domain-containing protein CP2.